The primary structure comprises 632 residues: tRNA uridine 5-carboxymethylaminomethyl modification enzyme MnmG (632 aa).

FAD is bound at residue 13 to 18 (GGGHAG). An NAD(+)-binding site is contributed by 273-287 (GPRYCPSIEDKIHRF).

Belongs to the MnmG family. In terms of assembly, homodimer. Heterotetramer of two MnmE and two MnmG subunits. It depends on FAD as a cofactor.

The protein resides in the cytoplasm. Functionally, NAD-binding protein involved in the addition of a carboxymethylaminomethyl (cmnm) group at the wobble position (U34) of certain tRNAs, forming tRNA-cmnm(5)s(2)U34. The sequence is that of tRNA uridine 5-carboxymethylaminomethyl modification enzyme MnmG from Psychrobacter cryohalolentis (strain ATCC BAA-1226 / DSM 17306 / VKM B-2378 / K5).